A 310-amino-acid chain; its full sequence is Probable manganese-dependent inorganic pyrophosphatase (310 aa).

His-9, Asp-13, Asp-15, Asp-75, His-97, and Asp-149 together coordinate Mn(2+).

It belongs to the PPase class C family. It depends on Mn(2+) as a cofactor.

It localises to the cytoplasm. It catalyses the reaction diphosphate + H2O = 2 phosphate + H(+). This is Probable manganese-dependent inorganic pyrophosphatase from Brevibacillus brevis (strain 47 / JCM 6285 / NBRC 100599).